Consider the following 748-residue polypeptide: Catalase-peroxidase (748 aa).

The tryptophyl-tyrosyl-methioninium (Trp-Tyr) (with M-255) cross-link spans 96–229; sequence WHSAGTYRVA…LAAAHMGLIY (134 aa). H97 (proton acceptor) is an active-site residue. Positions 229 to 255 form a cross-link, tryptophyl-tyrosyl-methioninium (Tyr-Met) (with W-96); sequence YVNPEGPDGNPDPIAAAKDIRTTFGRM. H270 is a heme b binding site.

Belongs to the peroxidase family. Peroxidase/catalase subfamily. In terms of assembly, homodimer or homotetramer. The cofactor is heme b. Formation of the three residue Trp-Tyr-Met cross-link is important for the catalase, but not the peroxidase activity of the enzyme.

Its subcellular location is the cytoplasm. It catalyses the reaction H2O2 + AH2 = A + 2 H2O. It carries out the reaction 2 H2O2 = O2 + 2 H2O. Bifunctional enzyme with both catalase and broad-spectrum peroxidase activity. Plays a crucial role in oxidative stress response during infection. Acts as an antigen and elicits antibody response in P.marneffei-infected AIDS patients, healthy people working in mycological laboratory, and healthy people in an endemic area. This Talaromyces marneffei (Penicillium marneffei) protein is Catalase-peroxidase.